The sequence spans 388 residues: Chalcone synthase DIV (388 aa).

The active site involves Cys164.

The protein belongs to the thiolase-like superfamily. Chalcone/stilbene synthases family.

It catalyses the reaction (E)-4-coumaroyl-CoA + 3 malonyl-CoA + 3 H(+) = 2',4,4',6'-tetrahydroxychalcone + 3 CO2 + 4 CoA. The protein operates within secondary metabolite biosynthesis; flavonoid biosynthesis. In terms of biological role, the primary product of this enzyme is 4,2',4',6'-tetrahydroxychalcone (also termed naringenin-chalcone or chalcone) which can under specific conditions spontaneously isomerize into naringenin. The protein is Chalcone synthase DIV (CHS-DIV) of Ipomoea batatas (Sweet potato).